We begin with the raw amino-acid sequence, 341 residues long: Anthranilate phosphoribosyltransferase (341 aa).

Residues Gly81, 84–85 (GD), Thr89, 91–94 (NIST), 109–117 (KHGNRKASS), and Thr121 each bind 5-phospho-alpha-D-ribose 1-diphosphate. Gly81 is an anthranilate binding site. Ser93 is a binding site for Mg(2+). Residue Asn112 coordinates anthranilate. Position 167 (Arg167) interacts with anthranilate. Mg(2+) is bound by residues Asp226 and Glu227.

It belongs to the anthranilate phosphoribosyltransferase family. As to quaternary structure, homodimer. Mg(2+) is required as a cofactor.

It carries out the reaction N-(5-phospho-beta-D-ribosyl)anthranilate + diphosphate = 5-phospho-alpha-D-ribose 1-diphosphate + anthranilate. It functions in the pathway amino-acid biosynthesis; L-tryptophan biosynthesis; L-tryptophan from chorismate: step 2/5. Its function is as follows. Catalyzes the transfer of the phosphoribosyl group of 5-phosphorylribose-1-pyrophosphate (PRPP) to anthranilate to yield N-(5'-phosphoribosyl)-anthranilate (PRA). The sequence is that of Anthranilate phosphoribosyltransferase from Parvibaculum lavamentivorans (strain DS-1 / DSM 13023 / NCIMB 13966).